Here is a 408-residue protein sequence, read N- to C-terminus: UDP-N-acetylglucosamine--N-acetylmuramyl-(pentapeptide) pyrophosphoryl-undecaprenol N-acetylglucosamine transferase (408 aa).

The disordered stretch occupies residues 1 to 20 (MNDTVKKPTGGRGDDPLPAG). UDP-N-acetyl-alpha-D-glucosamine-binding positions include 41-43 (TAG), N160, R197, S231, and Q327.

The protein belongs to the glycosyltransferase 28 family. MurG subfamily.

The protein resides in the cell membrane. It carries out the reaction di-trans,octa-cis-undecaprenyl diphospho-N-acetyl-alpha-D-muramoyl-L-alanyl-D-glutamyl-meso-2,6-diaminopimeloyl-D-alanyl-D-alanine + UDP-N-acetyl-alpha-D-glucosamine = di-trans,octa-cis-undecaprenyl diphospho-[N-acetyl-alpha-D-glucosaminyl-(1-&gt;4)]-N-acetyl-alpha-D-muramoyl-L-alanyl-D-glutamyl-meso-2,6-diaminopimeloyl-D-alanyl-D-alanine + UDP + H(+). Its pathway is cell wall biogenesis; peptidoglycan biosynthesis. Functionally, cell wall formation. Catalyzes the transfer of a GlcNAc subunit on undecaprenyl-pyrophosphoryl-MurNAc-pentapeptide (lipid intermediate I) to form undecaprenyl-pyrophosphoryl-MurNAc-(pentapeptide)GlcNAc (lipid intermediate II). The polypeptide is UDP-N-acetylglucosamine--N-acetylmuramyl-(pentapeptide) pyrophosphoryl-undecaprenol N-acetylglucosamine transferase (Mycolicibacterium paratuberculosis (strain ATCC BAA-968 / K-10) (Mycobacterium paratuberculosis)).